Reading from the N-terminus, the 482-residue chain is Aspartyl/glutamyl-tRNA(Asn/Gln) amidotransferase subunit B (482 aa).

This sequence belongs to the GatB/GatE family. GatB subfamily. Heterotrimer of A, B and C subunits.

It carries out the reaction L-glutamyl-tRNA(Gln) + L-glutamine + ATP + H2O = L-glutaminyl-tRNA(Gln) + L-glutamate + ADP + phosphate + H(+). The enzyme catalyses L-aspartyl-tRNA(Asn) + L-glutamine + ATP + H2O = L-asparaginyl-tRNA(Asn) + L-glutamate + ADP + phosphate + 2 H(+). Allows the formation of correctly charged Asn-tRNA(Asn) or Gln-tRNA(Gln) through the transamidation of misacylated Asp-tRNA(Asn) or Glu-tRNA(Gln) in organisms which lack either or both of asparaginyl-tRNA or glutaminyl-tRNA synthetases. The reaction takes place in the presence of glutamine and ATP through an activated phospho-Asp-tRNA(Asn) or phospho-Glu-tRNA(Gln). In Thermotoga petrophila (strain ATCC BAA-488 / DSM 13995 / JCM 10881 / RKU-1), this protein is Aspartyl/glutamyl-tRNA(Asn/Gln) amidotransferase subunit B.